The primary structure comprises 168 residues: Photosystem I assembly protein Ycf3 (168 aa).

TPR repeat units follow at residues 35–68 (AFTY…EIDP), 72–105 (SYIL…NPFL), and 120–153 (GEQA…TPGN).

This sequence belongs to the Ycf3 family.

It is found in the plastid. The protein resides in the chloroplast thylakoid membrane. Essential for the assembly of the photosystem I (PSI) complex. May act as a chaperone-like factor to guide the assembly of the PSI subunits. This is Photosystem I assembly protein Ycf3 from Nandina domestica (Heavenly bamboo).